Reading from the N-terminus, the 300-residue chain is Nucleotide-binding protein TM1040_2438 (300 aa).

Position 24-31 (24-31) interacts with ATP; that stretch reads GPSGAGRT. Residue 71–74 coordinates GTP; it reads DPRN.

Belongs to the RapZ-like family.

Its function is as follows. Displays ATPase and GTPase activities. The sequence is that of Nucleotide-binding protein TM1040_2438 from Ruegeria sp. (strain TM1040) (Silicibacter sp.).